The chain runs to 208 residues: MLQRLNCLLMQAGIVITDTQKTQLVQLVELLHKWNKAYNLTSVRDPDAMLVKHILDSLVVSPHLHGERFIDVGTGPGLPGLPLAIINPDKQFVLLDSLGKRINFIRQVIQVLGLTNVTPVKSRVEEYQPDVGFDCVLSRAFASLEDMLSWCHHLPSEQGSFLALKGQYPEQELAQLPANIRLVACHELRVPELEGERHLLEFKHIQPE.

S-adenosyl-L-methionine contacts are provided by residues Gly73, Leu78, 124-125, and Arg139; that span reads VE.

Belongs to the methyltransferase superfamily. RNA methyltransferase RsmG family.

The protein resides in the cytoplasm. The catalysed reaction is guanosine(527) in 16S rRNA + S-adenosyl-L-methionine = N(7)-methylguanosine(527) in 16S rRNA + S-adenosyl-L-homocysteine. Its function is as follows. Specifically methylates the N7 position of guanine in position 527 of 16S rRNA. The chain is Ribosomal RNA small subunit methyltransferase G from Aeromonas salmonicida (strain A449).